Reading from the N-terminus, the 352-residue chain is UDP-3-O-acylglucosamine N-acyltransferase (352 aa).

Residue H242 is the Proton acceptor of the active site.

This sequence belongs to the transferase hexapeptide repeat family. LpxD subfamily. Homotrimer.

It catalyses the reaction a UDP-3-O-[(3R)-3-hydroxyacyl]-alpha-D-glucosamine + a (3R)-hydroxyacyl-[ACP] = a UDP-2-N,3-O-bis[(3R)-3-hydroxyacyl]-alpha-D-glucosamine + holo-[ACP] + H(+). It functions in the pathway bacterial outer membrane biogenesis; LPS lipid A biosynthesis. Its function is as follows. Catalyzes the N-acylation of UDP-3-O-acylglucosamine using 3-hydroxyacyl-ACP as the acyl donor. Is involved in the biosynthesis of lipid A, a phosphorylated glycolipid that anchors the lipopolysaccharide to the outer membrane of the cell. The polypeptide is UDP-3-O-acylglucosamine N-acyltransferase (Alkalilimnicola ehrlichii (strain ATCC BAA-1101 / DSM 17681 / MLHE-1)).